The chain runs to 278 residues: MAPSGSLRIPVAVLLLLLWGAPWAHGKRSDVRIITDENWRELLEGEWMIEFYAPWCPACQNLQPEWESFAEWGEDLEVNVAKVDVTEQPGLSGRFIITALPTIYHCKDGEFRRYQGPRTKKDFINFISDKEWKSIEPVSSWFGPGSILMSSMSALFQLSMWIRTCHNYFIEDLGLPIWGSYTVFALATLLSGLLLGLFMIFVADCLCPSKRRRPQPYPSRKLLPESSQPLKKVEEEQEADVEDVSEEESESKEGANKDFAQNAVRQRSVGPSLATDKS.

The signal sequence occupies residues 1–26 (MAPSGSLRIPVAVLLLLLWGAPWAHG). A Thioredoxin domain is found at 27-132 (KRSDVRIITD…FINFISDKEW (106 aa)). Residues 27–180 (KRSDVRIITD…EDLGLPIWGS (154 aa)) lie on the Extracellular side of the membrane. Catalysis depends on nucleophile residues Cys-56 and Cys-59. Cys-56 and Cys-59 are disulfide-bonded. Residues 181–203 (YTVFALATLLSGLLLGLFMIFVA) traverse the membrane as a helical segment. Residues 204–278 (DCLCPSKRRR…VGPSLATDKS (75 aa)) lie on the Cytoplasmic side of the membrane. S-palmitoyl cysteine attachment occurs at residues Cys-205 and Cys-207. The interval 213 to 278 (RPQPYPSRKL…VGPSLATDKS (66 aa)) is disordered. Residues Ser-226, Ser-245, Ser-268, Ser-272, and Ser-278 each carry the phosphoserine modification. Acidic residues predominate over residues 235-250 (EEQEADVEDVSEEESE).

As to quaternary structure, interacts with ATP2A2. Palmitoylated; palmitoylation is required for localization to mitochondria-associated endoplasmic reticulum membrane (MAM).

The protein localises to the endoplasmic reticulum membrane. The protein resides in the mitochondrion membrane. It localises to the secreted. The enzyme catalyses Catalyzes the rearrangement of -S-S- bonds in proteins.. Functionally, thiredoxin domain-containing protein that participates in various redox reactions through the reversible oxidation of its active center dithiol to a disulfide and catalyze dithiol-disulfide exchange reactions. Acts as a key inhibitor of the alternative triglyceride biosynthesis pathway by inhibiting the activity of TMEM68/DIESL at the endoplasmic reticulum, thereby restricting accumulation of triacylglycerol. The alternative triglyceride biosynthesis pathway mediates formation of triacylglycerol from diacylglycerol and membrane phospholipids. Acts as a protein disulfide isomerase by catalyzing formation or reduction of disulfide bonds. Specifically mediates formation of disulfide bonds of transmembrane proteins at the endoplasmic reticulum membrane. Involved in endoplasmic reticulum-associated degradation (ERAD) via its protein disulfide isomerase activity by acting on folding-defective polypeptides at the endoplasmic reticulum membrane. Acts as a negative regulator of platelet aggregation following secretion in the extracellular space. Acts as a regulator of endoplasmic reticulum-mitochondria contact sites via its ability to regulate redox signals. Regulates endoplasmic reticulum-mitochondria Ca(2+) flux. The chain is Thioredoxin-related transmembrane protein 1 (TMX1) from Bos taurus (Bovine).